Consider the following 256-residue polypeptide: uncharacterized protein (256 aa).

2 disordered regions span residues 1 to 171 (MARG…QLKH) and 185 to 256 (NGQR…LYND). The stretch at 14–39 (KRRSKVQEEEEHVEGSEEEVEEPEQK) forms a coiled coil. Acidic residues-rich tracts occupy residues 21 to 35 (EEEE…EVEE) and 64 to 92 (SDDD…DNDE). The span at 108–129 (NRGDHESHDDNSDNEEQGDRGN) shows a compositional bias: basic and acidic residues. Residues 192-205 (KRGGPPRGSFGQRG) are compositionally biased toward gly residues. The span at 219-234 (RQGDTRDTRDTRDTRL) shows a compositional bias: basic and acidic residues.

This is an uncharacterized protein from Acanthamoeba polyphaga (Amoeba).